The following is a 306-amino-acid chain: ATP phosphoribosyltransferase (306 aa).

This sequence belongs to the ATP phosphoribosyltransferase family.

The protein resides in the cytoplasm. It carries out the reaction 1-(5-phospho-beta-D-ribosyl)-ATP + diphosphate = 5-phospho-alpha-D-ribose 1-diphosphate + ATP. It functions in the pathway amino-acid biosynthesis; L-histidine biosynthesis; L-histidine from 5-phospho-alpha-D-ribose 1-diphosphate: step 1/9. Functionally, catalyzes the condensation of ATP and 5-phosphoribose 1-diphosphate to form N'-(5'-phosphoribosyl)-ATP (PR-ATP). Has a crucial role in the pathway because the rate of histidine biosynthesis seems to be controlled primarily by regulation of the enzymatic activity. The chain is ATP phosphoribosyltransferase (HIS1) from Candida glabrata (strain ATCC 2001 / BCRC 20586 / JCM 3761 / NBRC 0622 / NRRL Y-65 / CBS 138) (Yeast).